A 440-amino-acid chain; its full sequence is 3-phosphoshikimate 1-carboxyvinyltransferase (440 aa).

K26, S27, and R31 together coordinate 3-phosphoshikimate. K26 contacts phosphoenolpyruvate. G99 and R127 together coordinate phosphoenolpyruvate. 4 residues coordinate 3-phosphoshikimate: S172, Q174, D320, and K347. A phosphoenolpyruvate-binding site is contributed by Q174. The active-site Proton acceptor is D320. R351 and R392 together coordinate phosphoenolpyruvate.

Belongs to the EPSP synthase family. As to quaternary structure, monomer.

It is found in the cytoplasm. It catalyses the reaction 3-phosphoshikimate + phosphoenolpyruvate = 5-O-(1-carboxyvinyl)-3-phosphoshikimate + phosphate. It functions in the pathway metabolic intermediate biosynthesis; chorismate biosynthesis; chorismate from D-erythrose 4-phosphate and phosphoenolpyruvate: step 6/7. Functionally, catalyzes the transfer of the enolpyruvyl moiety of phosphoenolpyruvate (PEP) to the 5-hydroxyl of shikimate-3-phosphate (S3P) to produce enolpyruvyl shikimate-3-phosphate and inorganic phosphate. In Xanthomonas euvesicatoria pv. vesicatoria (strain 85-10) (Xanthomonas campestris pv. vesicatoria), this protein is 3-phosphoshikimate 1-carboxyvinyltransferase.